The chain runs to 104 residues: Increased recombination centers protein 13 (104 aa).

The helical transmembrane segment at 63–83 threads the bilayer; sequence LVHLFSYVFFLFLLKICVDVL.

It is found in the membrane. Its function is as follows. May be involved in a pathway contributing to genomic integrity. In Saccharomyces cerevisiae (strain ATCC 204508 / S288c) (Baker's yeast), this protein is Increased recombination centers protein 13 (IRC13).